The following is a 412-amino-acid chain: Aurora kinase (412 aa).

Residues 94–119 (NEKVRPSKSSHIPVKSPIRKKGHSPA) are disordered. Residues 148 to 401 (FEIGKVLGKG…LAEVMNHPWI (254 aa)) enclose the Protein kinase domain. Residues 154 to 162 (LGKGKLGKV) and Lys177 contribute to the ATP site. The active-site Proton acceptor is the Asp271.

Belongs to the protein kinase superfamily. Ser/Thr protein kinase family. Aurora subfamily.

It is found in the nucleus. The protein resides in the cytoplasm. Its subcellular location is the cytoskeleton. The protein localises to the spindle. It localises to the chromosome. It is found in the centromere. The protein resides in the kinetochore. The catalysed reaction is L-seryl-[protein] + ATP = O-phospho-L-seryl-[protein] + ADP + H(+). It carries out the reaction L-threonyl-[protein] + ATP = O-phospho-L-threonyl-[protein] + ADP + H(+). Its function is as follows. Component of the chromosomal passenger complex (CPC), a complex that acts as a key regulator of chromosome segregation and cytokinesis. Has a role in error-correction of aberrent kinetochore-microtubule attachments to ensure that sister kinetochores become bioriented and connect to opposite poles by promoting spindle assembly checkpoint signaling. This Debaryomyces hansenii (strain ATCC 36239 / CBS 767 / BCRC 21394 / JCM 1990 / NBRC 0083 / IGC 2968) (Yeast) protein is Aurora kinase (IPL1).